The primary structure comprises 138 residues: Ribosome maturation factor RimP (138 aa).

The protein belongs to the RimP family.

The protein resides in the cytoplasm. Required for maturation of 30S ribosomal subunits. This is Ribosome maturation factor RimP from Campylobacter concisus (strain 13826).